The primary structure comprises 311 residues: Uridine phosphorylase 1 (311 aa).

Residues Gly61, Arg95, and 139–142 (RIGT) contribute to the phosphate site. Uridine-binding positions include 143–144 (SG) and 218–220 (QGR).

The protein belongs to the PNP/UDP phosphorylase family. As to quaternary structure, homodimer. Post-translationally, the N-terminus is blocked.

The catalysed reaction is uridine + phosphate = alpha-D-ribose 1-phosphate + uracil. It catalyses the reaction 2'-deoxyuridine + phosphate = 2-deoxy-alpha-D-ribose 1-phosphate + uracil. The protein operates within pyrimidine metabolism; UMP biosynthesis via salvage pathway; uracil from uridine (phosphorylase route): step 1/1. With respect to regulation, strongly inhibited by 2,2'-anhydro-5-ethyluridine, a competitive inhibitor. Its function is as follows. Catalyzes the reversible phosphorylytic cleavage of uridine to uracil and ribose-1-phosphate which can then be utilized as carbon and energy sources or in the rescue of pyrimidine bases for nucleotide synthesis. Shows broad substrate specificity and can also accept deoxyuridine and other analogous compounds. The sequence is that of Uridine phosphorylase 1 from Mus musculus (Mouse).